The chain runs to 115 residues: Large ribosomal subunit protein bL19 (115 aa).

Belongs to the bacterial ribosomal protein bL19 family.

This protein is located at the 30S-50S ribosomal subunit interface and may play a role in the structure and function of the aminoacyl-tRNA binding site. This chain is Large ribosomal subunit protein bL19, found in Shouchella clausii (strain KSM-K16) (Alkalihalobacillus clausii).